Consider the following 362-residue polypeptide: DNA polymerase IV (362 aa).

One can recognise a UmuC domain in the interval 6 to 187 (IIHVDMDAFY…LPVSSFHGVG (182 aa)). Mg(2+)-binding residues include Asp-10 and Asp-105. Glu-106 is an active-site residue.

It belongs to the DNA polymerase type-Y family. Monomer. Requires Mg(2+) as cofactor.

The protein resides in the cytoplasm. The catalysed reaction is DNA(n) + a 2'-deoxyribonucleoside 5'-triphosphate = DNA(n+1) + diphosphate. In terms of biological role, poorly processive, error-prone DNA polymerase involved in untargeted mutagenesis. Copies undamaged DNA at stalled replication forks, which arise in vivo from mismatched or misaligned primer ends. These misaligned primers can be extended by PolIV. Exhibits no 3'-5' exonuclease (proofreading) activity. May be involved in translesional synthesis, in conjunction with the beta clamp from PolIII. The sequence is that of DNA polymerase IV from Leptospira interrogans serogroup Icterohaemorrhagiae serovar copenhageni (strain Fiocruz L1-130).